A 492-amino-acid polypeptide reads, in one-letter code: Aspartyl/glutamyl-tRNA(Asn/Gln) amidotransferase subunit B (492 aa).

This sequence belongs to the GatB/GatE family. GatB subfamily. Heterotrimer of A, B and C subunits.

It catalyses the reaction L-glutamyl-tRNA(Gln) + L-glutamine + ATP + H2O = L-glutaminyl-tRNA(Gln) + L-glutamate + ADP + phosphate + H(+). The enzyme catalyses L-aspartyl-tRNA(Asn) + L-glutamine + ATP + H2O = L-asparaginyl-tRNA(Asn) + L-glutamate + ADP + phosphate + 2 H(+). Functionally, allows the formation of correctly charged Asn-tRNA(Asn) or Gln-tRNA(Gln) through the transamidation of misacylated Asp-tRNA(Asn) or Glu-tRNA(Gln) in organisms which lack either or both of asparaginyl-tRNA or glutaminyl-tRNA synthetases. The reaction takes place in the presence of glutamine and ATP through an activated phospho-Asp-tRNA(Asn) or phospho-Glu-tRNA(Gln). The polypeptide is Aspartyl/glutamyl-tRNA(Asn/Gln) amidotransferase subunit B (Prochlorococcus marinus (strain SARG / CCMP1375 / SS120)).